A 523-amino-acid chain; its full sequence is GMP synthase [glutamine-hydrolyzing] (523 aa).

In terms of domain architecture, Glutamine amidotransferase type-1 spans 9-198 (PVLVVDFGAQ…LTEIAGLEQN (190 aa)). The active-site Nucleophile is the C86. Active-site residues include H172 and E174. The GMPS ATP-PPase domain occupies 199–397 (WTAANIAEEL…LGLPEEIVGR (199 aa)). 227 to 233 (SGGVDSA) contacts ATP.

Homodimer.

It catalyses the reaction XMP + L-glutamine + ATP + H2O = GMP + L-glutamate + AMP + diphosphate + 2 H(+). It functions in the pathway purine metabolism; GMP biosynthesis; GMP from XMP (L-Gln route): step 1/1. Catalyzes the synthesis of GMP from XMP. The protein is GMP synthase [glutamine-hydrolyzing] of Corynebacterium glutamicum (strain R).